A 428-amino-acid polypeptide reads, in one-letter code: Enolase (428 aa).

Position 163 (Q163) interacts with (2R)-2-phosphoglycerate. E205 acts as the Proton donor in catalysis. Mg(2+) contacts are provided by D242, E286, and D313. 4 residues coordinate (2R)-2-phosphoglycerate: K338, R367, S368, and K389. The active-site Proton acceptor is the K338.

The protein belongs to the enolase family. Mg(2+) is required as a cofactor.

It is found in the cytoplasm. The protein localises to the secreted. Its subcellular location is the cell surface. It carries out the reaction (2R)-2-phosphoglycerate = phosphoenolpyruvate + H2O. It participates in carbohydrate degradation; glycolysis; pyruvate from D-glyceraldehyde 3-phosphate: step 4/5. Functionally, catalyzes the reversible conversion of 2-phosphoglycerate (2-PG) into phosphoenolpyruvate (PEP). It is essential for the degradation of carbohydrates via glycolysis. In Bordetella petrii (strain ATCC BAA-461 / DSM 12804 / CCUG 43448), this protein is Enolase.